A 599-amino-acid chain; its full sequence is rRNA (cytosine-C(5))-methyltransferase NOP2C (599 aa).

Residues 158–265 form the PUA domain; the sequence is PKEVLVSRKC…IAVDLNHRVF (108 aa). S-adenosyl-L-methionine is bound by residues 304-310, D328, and D355; that span reads CAAPGGK. Positions 372 to 454 are disordered; it reads LINGDNSSSM…GGRAGKSQGF (83 aa). Over residues 378–388 the composition is skewed to low complexity; that stretch reads SSSMTSHSELS. The segment covering 399-412 has biased composition (basic and acidic residues); the sequence is RRSEADKSCEKNDS. Residues 413 to 424 show a composition bias toward polar residues; that stretch reads TEQPNGGDNVSQ. Over residues 428-438 the composition is skewed to basic residues; the sequence is RKNKGRLKNGR. S-adenosyl-L-methionine is bound at residue D465. The active-site Nucleophile is C516.

This sequence belongs to the class I-like SAM-binding methyltransferase superfamily. RsmB/NOP family.

The protein resides in the nucleus. It localises to the nucleolus. It catalyses the reaction a cytidine in rRNA + S-adenosyl-L-methionine = a 5-methylcytidine in rRNA + S-adenosyl-L-homocysteine + H(+). Functionally, involved in ribosomal large subunit assembly. S-adenosyl-L-methionine-dependent methyltransferase that may methylates the C(5) position of cytosine in rRNA. May play a role in the regulation of the cell cycle and the increased nucleolar activity that is associated with the cell proliferation. Seems involved in the regulation of cell proliferation. In Arabidopsis thaliana (Mouse-ear cress), this protein is rRNA (cytosine-C(5))-methyltransferase NOP2C.